The primary structure comprises 529 residues: MTERRDNVSHAPDAIEGPNDGAHAEDTSPGFFSFENLGVAQVQVVGGTLNGFSIGFVAVYILLYEVATNCSLFKTTEACKAVGSYGCEWKDTEVCSWKKECDSDSDGVNPCESLIGYSSLYSGIFASAMIVGSMVGSIIAGKCITMFGLKKSFIIVGVMSVVASALNHISVATNEFWVLCAGRVLMGIGLGVVCVICPMYVNENAHPKLSKVDGVLFQVFITFGIMLAAMLGLILDKTVNYDNDPDMAGRFHGFCAVSSVLSVAMFLVGMFLRESTATFSQDDDGKADGGMDPNEYGWGQMLWPLFMGAVTAGTLQLTGINAVMNYAPKITENLGMDPSLGNFLVMAWNFVTSLVAIPLASRFTMRQMFITCSFVASCMCLFLCGIPVFPGVAEEKVKNGVATTGIALFIAAFEFGVGSCFFVLAQDLFPPSFRPKGSSFVVMMQFIFNILINLLYPITTEAISGGATGDQDKGQAVVFILFGLIGLICFVLQFFYLYPYDANQDHENDHGTEPVERILSPVDVPTPRN.

Residues 1–22 are disordered; sequence MTERRDNVSHAPDAIEGPNDGA. Residues 1–43 lie on the Cytoplasmic side of the membrane; the sequence is MTERRDNVSHAPDAIEGPNDGAHAEDTSPGFFSFENLGVAQVQ. Residues 44-64 traverse the membrane as a helical segment; the sequence is VVGGTLNGFSIGFVAVYILLY. The Extracellular portion of the chain corresponds to 65-119; it reads EVATNCSLFKTTEACKAVGSYGCEWKDTEVCSWKKECDSDSDGVNPCESLIGYSS. Residues 120-140 form a helical membrane-spanning segment; sequence LYSGIFASAMIVGSMVGSIIA. The Cytoplasmic segment spans residues 141-152; that stretch reads GKCITMFGLKKS. Residues 153-173 traverse the membrane as a helical segment; it reads FIIVGVMSVVASALNHISVAT. The Extracellular segment spans residues 174-175; that stretch reads NE. The helical transmembrane segment at 176-196 threads the bilayer; the sequence is FWVLCAGRVLMGIGLGVVCVI. Over 197-214 the chain is Cytoplasmic; that stretch reads CPMYVNENAHPKLSKVDG. The helical transmembrane segment at 215-235 threads the bilayer; sequence VLFQVFITFGIMLAAMLGLIL. Residues 236–250 are Extracellular-facing; the sequence is DKTVNYDNDPDMAGR. A helical transmembrane segment spans residues 251–271; it reads FHGFCAVSSVLSVAMFLVGMF. The Cytoplasmic segment spans residues 272–300; sequence LRESTATFSQDDDGKADGGMDPNEYGWGQ. A helical transmembrane segment spans residues 301-321; the sequence is MLWPLFMGAVTAGTLQLTGIN. Over 322 to 339 the chain is Extracellular; it reads AVMNYAPKITENLGMDPS. Residues 340–360 traverse the membrane as a helical segment; it reads LGNFLVMAWNFVTSLVAIPLA. Over 361–368 the chain is Cytoplasmic; the sequence is SRFTMRQM. A helical transmembrane segment spans residues 369–389; sequence FITCSFVASCMCLFLCGIPVF. At 390–404 the chain is on the extracellular side; sequence PGVAEEKVKNGVATT. Residues 405-425 traverse the membrane as a helical segment; it reads GIALFIAAFEFGVGSCFFVLA. The Cytoplasmic segment spans residues 426–439; it reads QDLFPPSFRPKGSS. The chain crosses the membrane as a helical span at residues 440–460; sequence FVVMMQFIFNILINLLYPITT. At 461-476 the chain is on the extracellular side; that stretch reads EAISGGATGDQDKGQA. Residues 477–497 traverse the membrane as a helical segment; that stretch reads VVFILFGLIGLICFVLQFFYL. Over 498–529 the chain is Cytoplasmic; the sequence is YPYDANQDHENDHGTEPVERILSPVDVPTPRN. The interval 508 to 529 is disordered; that stretch reads NDHGTEPVERILSPVDVPTPRN.

Belongs to the major facilitator superfamily. Sugar transporter (TC 2.A.1.1) family.

The protein resides in the membrane. In terms of biological role, facilitative glucose transporter. The polypeptide is Glucose transporter 2A (THT2A) (Trypanosoma brucei brucei).